The sequence spans 37 residues: Large ribosomal subunit protein bL36 (37 aa).

It belongs to the bacterial ribosomal protein bL36 family.

The chain is Large ribosomal subunit protein bL36 from Pasteurella multocida (strain Pm70).